We begin with the raw amino-acid sequence, 434 residues long: UDP-N-acetylmuramoylalanine--D-glutamate ligase (434 aa).

117–123 lines the ATP pocket; that stretch reads GTNGKST.

It belongs to the MurCDEF family.

Its subcellular location is the cytoplasm. It carries out the reaction UDP-N-acetyl-alpha-D-muramoyl-L-alanine + D-glutamate + ATP = UDP-N-acetyl-alpha-D-muramoyl-L-alanyl-D-glutamate + ADP + phosphate + H(+). It functions in the pathway cell wall biogenesis; peptidoglycan biosynthesis. Functionally, cell wall formation. Catalyzes the addition of glutamate to the nucleotide precursor UDP-N-acetylmuramoyl-L-alanine (UMA). The polypeptide is UDP-N-acetylmuramoylalanine--D-glutamate ligase (Sphingopyxis alaskensis (strain DSM 13593 / LMG 18877 / RB2256) (Sphingomonas alaskensis)).